The sequence spans 271 residues: ATP synthase subunit a (271 aa).

The next 5 membrane-spanning stretches (helical) occupy residues 38–58, 100–120, 146–166, 220–240, and 242–262; these read FWTL…LFLL, LIAP…LMDL, DVNI…FYSI, LIFI…LNVP, and AIFH…LTIV.

This sequence belongs to the ATPase A chain family. In terms of assembly, F-type ATPases have 2 components, CF(1) - the catalytic core - and CF(0) - the membrane proton channel. CF(1) has five subunits: alpha(3), beta(3), gamma(1), delta(1), epsilon(1). CF(0) has three main subunits: a(1), b(2) and c(9-12). The alpha and beta chains form an alternating ring which encloses part of the gamma chain. CF(1) is attached to CF(0) by a central stalk formed by the gamma and epsilon chains, while a peripheral stalk is formed by the delta and b chains.

Its subcellular location is the cell inner membrane. In terms of biological role, key component of the proton channel; it plays a direct role in the translocation of protons across the membrane. The sequence is that of ATP synthase subunit a from Citrobacter koseri (strain ATCC BAA-895 / CDC 4225-83 / SGSC4696).